We begin with the raw amino-acid sequence, 472 residues long: UDP-glycosyltransferase 100 (472 aa).

His-15 (proton acceptor) is an active-site residue. His-15 contributes to the an anthocyanidin binding site. The Charge relay role is filled by Asp-117. 7 residues coordinate UDP-alpha-D-glucose: Ala-344, Gln-346, His-361, Trp-364, Asn-365, Ser-366, and Glu-369. Gly-384 is a binding site for an anthocyanidin. UDP-alpha-D-glucose is bound by residues Glu-385 and Gln-386.

It belongs to the UDP-glycosyltransferase family.

The catalysed reaction is (20S)-protopanaxadiol + UDP-alpha-D-glucose = (20S)-ginsenoside C-K + UDP + H(+). It carries out the reaction (20S)-protopanaxatriol + UDP-alpha-D-glucose = (20S)-ginsenoside Rh1 + UDP + H(+). It catalyses the reaction (20S)-ginsenoside F1 + UDP-alpha-D-glucose = (20S)-ginsenoside Rg1 + UDP + H(+). It functions in the pathway secondary metabolite biosynthesis; terpenoid biosynthesis. Component of the dammarane-type triterpene saponins (e.g. PPT-type ginsenosides or panaxosides) biosynthetic pathway. Glycosyltransferase that catalyzes the biosynthesis of ginsenoside Rh1 from protopanaxatriol (PPT) and the conversion of ginsenoside F1 to ginsenoside Rg1. The protein is UDP-glycosyltransferase 100 of Panax ginseng (Korean ginseng).